A 327-amino-acid polypeptide reads, in one-letter code: 2-keto-3-deoxygluconate permease (327 aa).

Transmembrane regions (helical) follow at residues Ile10 to Pro30, Gly42 to Ile62, Lys73 to Ser93, Ile95 to Val115, Ala139 to Gly159, Ile163 to Ala183, Val199 to Ile219, Leu224 to Ala244, Thr254 to Ala274, and Ser289 to Trp309.

Belongs to the KdgT transporter family.

The protein localises to the cell inner membrane. The catalysed reaction is 2-dehydro-3-deoxy-D-gluconate(in) + H(+)(in) = 2-dehydro-3-deoxy-D-gluconate(out) + H(+)(out). Its function is as follows. Catalyzes the proton-dependent uptake of 2-keto-3-deoxygluconate (KDG) into the cell. The chain is 2-keto-3-deoxygluconate permease from Escherichia coli O127:H6 (strain E2348/69 / EPEC).